Consider the following 441-residue polypeptide: MPAMTPAFRRADLTGFLRTYGAALILLLAAMLAWQPAQAQLRVDISGTGATQYPVAIADFAVDDTHGRALAEVIRADLTRTGQFRLINAAGSGLNVDSQVAHDDWRAKGADFLAYGSITRGPDGRYDVRYRLADTVKKGQLDGVAFSGTEQELRRVAHQIADRIYEKITGVRGVFSTRIAYVLKRGSTYELQVADADGQNPQVALRSREPIISPSWSPDGSRLAYVSFESGKPVVYVHTLATSARIPVANFKGNNSAPAWSPDGSQLAVALTRDGLSQIYIVSAGGGSNMRRITRSPGIDTEPNFTPDGRSIIFTSDRSGGPQIYQTGLDGGDARRLTFNGGYNISPRISPDGSTLLYVARRDGAFRIASLNLSSGSETLLTDGRDDQSPSFAPNGMQVLYAAIQNGRSVLAGVSSDGRVRQTLSVLNGEIREPTWGPFTR.

The N-terminal stretch at 1 to 39 is a signal peptide; the sequence is MPAMTPAFRRADLTGFLRTYGAALILLLAAMLAWQPAQA.

This sequence belongs to the TolB family. As to quaternary structure, the Tol-Pal system is composed of five core proteins: the inner membrane proteins TolA, TolQ and TolR, the periplasmic protein TolB and the outer membrane protein Pal. They form a network linking the inner and outer membranes and the peptidoglycan layer.

Its subcellular location is the periplasm. Functionally, part of the Tol-Pal system, which plays a role in outer membrane invagination during cell division and is important for maintaining outer membrane integrity. The protein is Tol-Pal system protein TolB of Bordetella bronchiseptica (strain ATCC BAA-588 / NCTC 13252 / RB50) (Alcaligenes bronchisepticus).